The chain runs to 517 residues: Probable G-protein coupled receptor Mth-like 4 (517 aa).

Residues 1-18 form the signal peptide; the sequence is MRILLIAVLFLLMPKSNA. The Extracellular segment spans residues 19–212; sequence EIPGCDFFDT…LSSEHSRTWK (194 aa). Intrachain disulfides connect Cys-23–Cys-77, Cys-79–Cys-84, Cys-88–Cys-183, Cys-89–Cys-100, and Cys-145–Cys-201. A glycan (N-linked (GlcNAc...) asparagine) is linked at Asn-39. Residues Asn-117 and Asn-165 are each glycosylated (N-linked (GlcNAc...) asparagine). Residues 213–233 traverse the membrane as a helical segment; sequence TVAIVISLICIILTISVYLYV. The Cytoplasmic segment spans residues 234–242; the sequence is EKLRNLHGK. The helical transmembrane segment at 243-263 threads the bilayer; that stretch reads CFICYLASLFLGYFFLVLNVW. Residues 264–272 lie on the Extracellular side of the membrane; the sequence is KYSSGFCVT. The chain crosses the membrane as a helical span at residues 273–293; the sequence is AGFLGYFSVMAAFFWLSVIGI. The Cytoplasmic segment spans residues 294–319; sequence HLRIKFSLASNCLHRLLPENPFRAYN. Residues 320-340 form a helical membrane-spanning segment; that stretch reads LYAWGIPLIMTAITYTADQVV. Residues 341 to 363 are Extracellular-facing; sequence KNEKLRPRVGVGKNCWIYTGDMT. The helical transmembrane segment at 364–384 threads the bilayer; sequence VMIYFYGPMLLLIAFNIIMFV. Residues 385-414 lie on the Cytoplasmic side of the membrane; it reads LSAIYIYNIKKNVKGLVHKQQTNQQINDQQ. A helical transmembrane segment spans residues 415–435; sequence MFAIFLRLFILMGLSWSFEIL. At 436–459 the chain is on the extracellular side; that stretch reads SFLLTKQQAWARALMVADYFNWSQ. Asn-456 carries N-linked (GlcNAc...) asparagine glycosylation. Residues 460-480 traverse the membrane as a helical segment; it reads GTIIFVLFILKPSILKLIIAG. Residues 481-517 lie on the Cytoplasmic side of the membrane; that stretch reads GRQNLPGSHHNSRSKAARYNSTHTACEGSIADPNAYC.

Belongs to the G-protein coupled receptor 2 family. Mth subfamily.

It is found in the cell membrane. The sequence is that of Probable G-protein coupled receptor Mth-like 4 (mthl4) from Drosophila melanogaster (Fruit fly).